Reading from the N-terminus, the 941-residue chain is Gamma-aminobutyric acid type B receptor subunit 2 (941 aa).

The signal sequence occupies residues 1–41 (MASPRSSGQPGPPPPPPPPPARLLLLLLLPLLLPLAPGAWG). The Extracellular segment spans residues 42–483 (WARGAPRPPP…LRKISLPLYS (442 aa)). Residue N90 is glycosylated (N-linked (GlcNAc...) asparagine). 3 disulfide bridges follow: C108-C135, C237-C266, and C265-C302. N298, N389, N404, and N453 each carry an N-linked (GlcNAc...) asparagine glycan. A helical transmembrane segment spans residues 484-504 (ILSALTILGMIMASAFLFFNI). Over 505-522 (KNRNQKLIKMSSPYMNNL) the chain is Cytoplasmic. A helical membrane pass occupies residues 523–543 (IILGGMLSYASIFLFGLDGSF). Residues 544-551 (VSEKTFET) lie on the Extracellular side of the membrane. The helical transmembrane segment at 552–572 (LCTVRTWILTVGYTTAFGAMF) threads the bilayer. The Cytoplasmic portion of the chain corresponds to 573 to 597 (AKTWRVHAIFKNVKMKKKIIKDQKL). The helical transmembrane segment at 598–618 (LVIVGGMLLIDLCILICWQAV) threads the bilayer. The Extracellular portion of the chain corresponds to 619–654 (DPLRRTVEKYSMEPDPAGRDISIRPLLEHCENTHMT). A helical transmembrane segment spans residues 655 to 675 (IWLGIVYAYKGLLMLFGCFLA). The Cytoplasmic portion of the chain corresponds to 676 to 691 (WETRNVSIPALNDSKY). Residues 692–712 (IGMSVYNVGIMCIIGAAVSFL) traverse the membrane as a helical segment. Residues 713–720 (TRDQPNVQ) lie on the Extracellular side of the membrane. Residues 721–741 (FCIVALVIIFCSTITLCLVFV) form a helical membrane-spanning segment. At 742–941 (PKLITLRTNP…PSFRVMVSGL (200 aa)) the chain is on the cytoplasmic side. Residues 763 to 790 (TQNQKKEDSKTSTSVTSVNQASTSRLEG) are disordered. Positions 773–787 (TSTSVTSVNQASTSR) are enriched in polar residues. Residues S776 and S779 each carry the phosphoserine modification. The stretch at 781 to 819 (NQASTSRLEGLQSENHRLRMKITELDKDLEEVTMQLQDT) forms a coiled coil. T819 bears the Phosphothreonine mark. A phosphoserine mark is found at S884, S893, S913, S916, S920, and S924.

This sequence belongs to the G-protein coupled receptor 3 family. GABA-B receptor subfamily. In terms of assembly, heterodimer of GABBR1 and GABBR2. Homodimers may form, but are inactive. Interacts (via C-terminus) with ATF4 (via leucine zipper domain). As to expression, highly expressed in brain, especially in cerebral cortex, thalamus, hippocampus, frontal, occipital and temporal lobe, occipital pole and cerebellum, followed by corpus callosum, caudate nucleus, spinal cord, amygdala and medulla. Weakly expressed in heart, testis and skeletal muscle.

Its subcellular location is the cell membrane. It localises to the postsynaptic cell membrane. Component of a heterodimeric G-protein coupled receptor for GABA, formed by GABBR1 and GABBR2. Within the heterodimeric GABA receptor, only GABBR1 seems to bind agonists, while GABBR2 mediates coupling to G proteins. Ligand binding causes a conformation change that triggers signaling via guanine nucleotide-binding proteins (G proteins) and modulates the activity of down-stream effectors, such as adenylate cyclase. Signaling inhibits adenylate cyclase, stimulates phospholipase A2, activates potassium channels, inactivates voltage-dependent calcium-channels and modulates inositol phospholipid hydrolysis. Plays a critical role in the fine-tuning of inhibitory synaptic transmission. Pre-synaptic GABA receptor inhibits neurotransmitter release by down-regulating high-voltage activated calcium channels, whereas postsynaptic GABA receptor decreases neuronal excitability by activating a prominent inwardly rectifying potassium (Kir) conductance that underlies the late inhibitory postsynaptic potentials. Not only implicated in synaptic inhibition but also in hippocampal long-term potentiation, slow wave sleep, muscle relaxation and antinociception. The polypeptide is Gamma-aminobutyric acid type B receptor subunit 2 (GABBR2) (Homo sapiens (Human)).